The sequence spans 209 residues: D-aminoacyl-tRNA deacylase 1 (209 aa).

The Gly-cisPro motif, important for rejection of L-amino acids motif lies at 139–140; that stretch reads GP. The disordered stretch occupies residues 142–209; it reads TIELESPAPG…EGDVSSEREP (68 aa). 2 stretches are compositionally biased toward basic and acidic residues: residues 159 to 170 and 181 to 194; these read QLSKLEKQQQRK and SSKE…EDRS. Phosphoserine occurs at positions 197, 204, and 205.

The protein belongs to the DTD family. As to quaternary structure, homodimer. Interacts with CDC45 and TOPBP1. In terms of processing, preferentially phosphorylated in cells arrested early in S phase. Phosphorylation in the C-terminus weakens the interaction with CDC45.

It is found in the nucleus. It localises to the cytoplasm. It catalyses the reaction glycyl-tRNA(Ala) + H2O = tRNA(Ala) + glycine + H(+). It carries out the reaction a D-aminoacyl-tRNA + H2O = a tRNA + a D-alpha-amino acid + H(+). In terms of biological role, an aminoacyl-tRNA editing enzyme that deacylates mischarged D-aminoacyl-tRNAs. Also deacylates mischarged glycyl-tRNA(Ala), protecting cells against glycine mischarging by AlaRS. Acts via tRNA-based rather than protein-based catalysis; rejects L-amino acids rather than detecting D-amino acids in the active site. By recycling D-aminoacyl-tRNA to D-amino acids and free tRNA molecules, this enzyme counteracts the toxicity associated with the formation of D-aminoacyl-tRNA entities in vivo and helps enforce protein L-homochirality. ATPase involved in DNA replication, may facilitate loading of CDC45 onto pre-replication complexes. The polypeptide is D-aminoacyl-tRNA deacylase 1 (Dtd1) (Mus musculus (Mouse)).